A 503-amino-acid chain; its full sequence is Cytochrome P450 3A9 (503 aa).

Position 442 (cysteine 442) interacts with heme.

Belongs to the cytochrome P450 family. The cofactor is heme. As to expression, mainly expressed in olfactory epithelium.

Its subcellular location is the endoplasmic reticulum membrane. The protein localises to the microsome membrane. It catalyses the reaction an organic molecule + reduced [NADPH--hemoprotein reductase] + O2 = an alcohol + oxidized [NADPH--hemoprotein reductase] + H2O + H(+). Functionally, this isozyme seems to be implicated in olfaction. Active in the demethylation of erythromycin as well as benzphetamine. The sequence is that of Cytochrome P450 3A9 (Cyp3a9) from Rattus norvegicus (Rat).